Reading from the N-terminus, the 384-residue chain is 5-amino-6-(D-ribitylamino)uracil--L-tyrosine 4-hydroxyphenyl transferase 2 (384 aa).

Residues 53-286 (VSYVVNRNIY…IAISRVILHT (234 aa)) form the Radical SAM core domain. [4Fe-4S] cluster is bound by residues cysteine 67, cysteine 71, and cysteine 74.

It belongs to the radical SAM superfamily. CofH family. Consists of two subunits, CofG and CofH. [4Fe-4S] cluster is required as a cofactor.

The catalysed reaction is 5-amino-6-(D-ribitylamino)uracil + L-tyrosine + S-adenosyl-L-methionine = 5-amino-5-(4-hydroxybenzyl)-6-(D-ribitylimino)-5,6-dihydrouracil + 2-iminoacetate + 5'-deoxyadenosine + L-methionine + H(+). The protein operates within cofactor biosynthesis; coenzyme F0 biosynthesis. In terms of biological role, catalyzes the radical-mediated synthesis of 5-amino-5-(4-hydroxybenzyl)-6-(D-ribitylimino)-5,6-dihydrouracil from 5-amino-6-(D-ribitylamino)uracil and L-tyrosine. This chain is 5-amino-6-(D-ribitylamino)uracil--L-tyrosine 4-hydroxyphenyl transferase 2, found in Methanosarcina barkeri (strain Fusaro / DSM 804).